The following is a 492-amino-acid chain: MASPSGKGARALEAPGCGPRPLARDLVDSVDDAEGLYVAVERCPLCNTTRRRLTCAKCVQSGDFVYFDGRDRERFIDKKERLSRLKSKQEEFQKEVLKAMEGKWITDQLRWKIMSCKMRIEQLKQTICKGNEEMEKNSEGLLKTKEKNQKLYSRAQRHQEKKEKIQRHNRKLGDLVEKKTIDLRSHYERLANLRRSHILELTSVIFPIEEVKTGVRDPADVSSESDSAMTSSTVSKLAEARRTTYLSGRWVCDDHNGDTSISITGPWISLPNNGDYSAYYSWVEEKKTTQGPDMEQSNPAYTISAALCYATQLVNILSHILDVNLPKKLCNSEFCGENLSKQKFTRAVKKLNANILYLCFSQHVNLDQLQPLHTLRNLMYLVSPSSEHLGRSGPFEVRADLEESMEFVDPGVAGESDESGDERVSDEETDLGTDWENLPSPRFCDIPSQSVEVSQSQSTQASPPIASSSAGGMISSAAASVTSWFKAYTGHR.

S29 is modified (phosphoserine). The interval 43 to 58 is cysteine repeats; that stretch reads CPLCNTTRRRLTCAKC. Residues 71–180 are a coiled coil; the sequence is DRERFIDKKE…KLGDLVEKKT (110 aa). The tract at residues 410-473 is disordered; it reads PGVAGESDES…PIASSSAGGM (64 aa). A BATS region spans residues 413 to 492; that stretch reads AGESDESGDE…SWFKAYTGHR (80 aa). The segment covering 415-433 has biased composition (acidic residues); that stretch reads ESDESGDERVSDEETDLGT. Position 416 is a phosphoserine (S416). T429 carries the phosphothreonine modification. Over residues 448 to 473 the composition is skewed to low complexity; it reads SQSVEVSQSQSTQASPPIASSSAGGM.

The protein belongs to the ATG14 family. In terms of assembly, forms homooligomers; homo-oligomerization is essential for the roles in membrane tethering and enhancement of SNARE-mediated fusion. Component of the PI3K (PI3KC3/PI3K-III/class III phosphatidylinositol 3-kinase) complex I (PI3KC3-C1) in which the core composed of the catalytic subunit PIK3C3, the regulatory subunit PIK3R4 and BECN1 is associated with ATG14. PI3KC3-C1 displays a V-shaped architecture with PIK3R4 serving as a bridge between PIK3C3 and the ATG14:BECN1 subcomplex. PI3KC3-C1 can associate with further regulatory subunits. Interacts with PIK3CB. Interacts (via coiled-coil domain) with BECN2 (via coiled-coil domain); this interaction is tighter than BECN2 self-association. Interacts with the STX17-SNAP29 binary t-SNARE complex. Interacts with NRBF2. Interacts with PIK3C3 and BECN1; this interaction is increased in the absence of TMEM39A. Interacts with STEEP1; the interaction is required for trafficking of STING1 from the endoplasmic reticulum. Interacts with ARMC3 (via ARM domains). In terms of processing, ubiquitinated via 'Lys-6', 'Lys-11' and 'Lys-63'-linked polyubiquitin chains on multiple lysines by MARCHF7, leading to ATG14 aggregation and loss of interaction with STX17.

The protein localises to the cytoplasm. The protein resides in the endoplasmic reticulum membrane. It is found in the preautophagosomal structure membrane. It localises to the cytoplasmic vesicle. Its subcellular location is the autophagosome membrane. Required for both basal and inducible autophagy. Determines the localization of the autophagy-specific PI3-kinase complex PI3KC3-C1. Plays a role in autophagosome formation and MAP1LC3/LC3 conjugation to phosphatidylethanolamine. Promotes BECN1 translocation from the trans-Golgi network to autophagosomes. Enhances PIK3C3 activity in a BECN1-dependent manner. Essential for the autophagy-dependent phosphorylation of BECN1. Stimulates the phosphorylation of BECN1, but suppresses the phosphorylation PIK3C3 by AMPK. Binds to STX17-SNAP29 binary t-SNARE complex on autophagosomes and primes it for VAMP8 interaction to promote autophagosome-endolysosome fusion. Modulates the hepatic lipid metabolism. In Homo sapiens (Human), this protein is Beclin 1-associated autophagy-related key regulator.